Here is a 376-residue protein sequence, read N- to C-terminus: Phosphate-binding protein (376 aa).

2 disulfide bridges follow: Cys113–Cys158 and Cys306–Cys369.

In terms of assembly, heterooligomer with human PON1. In terms of tissue distribution, found in human plasma.

The protein resides in the secreted. Functionally, phosphate-binding protein. The polypeptide is Phosphate-binding protein (Unknown prokaryotic organism).